We begin with the raw amino-acid sequence, 454 residues long: 3-phosphoshikimate 1-carboxyvinyltransferase (454 aa).

K39, S40, and R44 together coordinate 3-phosphoshikimate. A phosphoenolpyruvate-binding site is contributed by K39. G112 and R140 together coordinate phosphoenolpyruvate. 4 residues coordinate 3-phosphoshikimate: S185, Q187, D333, and K360. Residue Q187 participates in phosphoenolpyruvate binding. The Proton acceptor role is filled by D333. Phosphoenolpyruvate contacts are provided by R364 and R405.

Belongs to the EPSP synthase family. As to quaternary structure, monomer.

It is found in the cytoplasm. The enzyme catalyses 3-phosphoshikimate + phosphoenolpyruvate = 5-O-(1-carboxyvinyl)-3-phosphoshikimate + phosphate. It functions in the pathway metabolic intermediate biosynthesis; chorismate biosynthesis; chorismate from D-erythrose 4-phosphate and phosphoenolpyruvate: step 6/7. Its function is as follows. Catalyzes the transfer of the enolpyruvyl moiety of phosphoenolpyruvate (PEP) to the 5-hydroxyl of shikimate-3-phosphate (S3P) to produce enolpyruvyl shikimate-3-phosphate and inorganic phosphate. This is 3-phosphoshikimate 1-carboxyvinyltransferase from Xylella fastidiosa (strain 9a5c).